Here is a 340-residue protein sequence, read N- to C-terminus: Trimethylamine N-oxide transport system ATP-binding protein TmoW (340 aa).

The 237-residue stretch at 32–268 (GRSFDDIRAD…PTTGYVAKFT (237 aa)) folds into the ABC transporter domain. 64-71 (GLSGSGKS) provides a ligand contact to ATP.

It belongs to the ABC transporter superfamily. The complex is probably composed of two ATP-binding proteins (TmoW), two transmembrane proteins (TmoV) and a solute-binding protein (TmoX).

The protein localises to the cell inner membrane. The enzyme catalyses a quaternary ammonium(out) + ATP + H2O = a quaternary ammonium(in) + ADP + phosphate + H(+). Part of the ABC transporter complex TmoXWV involved in trimethylamine N-oxide (TMAO) import. Responsible for energy coupling to the transport system. Is specific for TMAO and essential for TMAO metabolism. This chain is Trimethylamine N-oxide transport system ATP-binding protein TmoW, found in Ruegeria pomeroyi (strain ATCC 700808 / DSM 15171 / DSS-3) (Silicibacter pomeroyi).